The sequence spans 532 residues: Apolipoprotein N-acyltransferase (532 aa).

6 helical membrane passes run Ile-37 to Ala-57, Trp-75 to Val-95, Leu-106 to Ala-126, Leu-128 to Glu-148, Val-179 to Leu-199, and Thr-207 to Leu-227. Residues Val-245–Ser-494 enclose the CN hydrolase domain. The active-site Proton acceptor is Glu-289. Lys-353 is a catalytic residue. Cys-406 functions as the Nucleophile in the catalytic mechanism. The helical transmembrane segment at Gly-505–Leu-525 threads the bilayer.

This sequence belongs to the CN hydrolase family. Apolipoprotein N-acyltransferase subfamily.

It is found in the cell inner membrane. It catalyses the reaction N-terminal S-1,2-diacyl-sn-glyceryl-L-cysteinyl-[lipoprotein] + a glycerophospholipid = N-acyl-S-1,2-diacyl-sn-glyceryl-L-cysteinyl-[lipoprotein] + a 2-acyl-sn-glycero-3-phospholipid + H(+). It functions in the pathway protein modification; lipoprotein biosynthesis (N-acyl transfer). Its function is as follows. Catalyzes the phospholipid dependent N-acylation of the N-terminal cysteine of apolipoprotein, the last step in lipoprotein maturation. The sequence is that of Apolipoprotein N-acyltransferase from Brucella melitensis biotype 1 (strain ATCC 23456 / CCUG 17765 / NCTC 10094 / 16M).